Consider the following 644-residue polypeptide: Cyclin-dependent kinase C-2 C (644 aa).

Positions phenylalanine 105–phenylalanine 389 constitute a Protein kinase domain. Residues isoleucine 111 to valine 119 and lysine 134 contribute to the ATP site. At tyrosine 116 the chain carries Phosphotyrosine. Aspartate 229 (proton acceptor) is an active-site residue. Threonine 263 is subject to Phosphothreonine. The Nuclear localization signal motif lies at arginine 420–leucine 427. Residues serine 565–serine 576 show a composition bias toward basic and acidic residues. Positions serine 565–serine 591 are disordered.

This sequence belongs to the protein kinase superfamily. CMGC Ser/Thr protein kinase family. CDC2/CDKX subfamily. Autophosphorylated. Expressed specifically in flowers and pollen.

It is found in the nucleus. The protein is Cyclin-dependent kinase C-2 C of Arabidopsis thaliana (Mouse-ear cress).